Consider the following 333-residue polypeptide: Holliday junction branch migration complex subunit RuvB (333 aa).

Positions 1–182 (MDERLVSGSA…FGVISRLEYY (182 aa)) are large ATPase domain (RuvB-L). ATP is bound by residues leucine 21, arginine 22, glycine 63, lysine 66, threonine 67, threonine 68, 129 to 131 (EDY), arginine 172, tyrosine 182, and arginine 219. Threonine 67 is a Mg(2+) binding site. A small ATPAse domain (RuvB-S) region spans residues 183 to 253 (QVDQLAQIIE…LAVEALERLQ (71 aa)). The segment at 256 to 333 (RLGLDHIDHK…AHLGMEVPKR (78 aa)) is head domain (RuvB-H). Arginine 311 and arginine 316 together coordinate DNA.

The protein belongs to the RuvB family. As to quaternary structure, homohexamer. Forms an RuvA(8)-RuvB(12)-Holliday junction (HJ) complex. HJ DNA is sandwiched between 2 RuvA tetramers; dsDNA enters through RuvA and exits via RuvB. An RuvB hexamer assembles on each DNA strand where it exits the tetramer. Each RuvB hexamer is contacted by two RuvA subunits (via domain III) on 2 adjacent RuvB subunits; this complex drives branch migration. In the full resolvosome a probable DNA-RuvA(4)-RuvB(12)-RuvC(2) complex forms which resolves the HJ.

The protein localises to the cytoplasm. It catalyses the reaction ATP + H2O = ADP + phosphate + H(+). In terms of biological role, the RuvA-RuvB-RuvC complex processes Holliday junction (HJ) DNA during genetic recombination and DNA repair, while the RuvA-RuvB complex plays an important role in the rescue of blocked DNA replication forks via replication fork reversal (RFR). RuvA specifically binds to HJ cruciform DNA, conferring on it an open structure. The RuvB hexamer acts as an ATP-dependent pump, pulling dsDNA into and through the RuvAB complex. RuvB forms 2 homohexamers on either side of HJ DNA bound by 1 or 2 RuvA tetramers; 4 subunits per hexamer contact DNA at a time. Coordinated motions by a converter formed by DNA-disengaged RuvB subunits stimulates ATP hydrolysis and nucleotide exchange. Immobilization of the converter enables RuvB to convert the ATP-contained energy into a lever motion, pulling 2 nucleotides of DNA out of the RuvA tetramer per ATP hydrolyzed, thus driving DNA branch migration. The RuvB motors rotate together with the DNA substrate, which together with the progressing nucleotide cycle form the mechanistic basis for DNA recombination by continuous HJ branch migration. Branch migration allows RuvC to scan DNA until it finds its consensus sequence, where it cleaves and resolves cruciform DNA. The chain is Holliday junction branch migration complex subunit RuvB from Geobacillus thermodenitrificans (strain NG80-2).